A 785-amino-acid polypeptide reads, in one-letter code: MGSDWDEIKRLAADFQKAQLTSTLQQLSERNCVEIVALLLEKQLLDVVFTNDGKEYITPDHLEREIQDELYTNGGRANLVEVSKTLNVDLSRIETLAERIAEENPQIHLILGQLIDEDYISHIAQEINEKLALRGEISISDLASQFDLPSDFLQHQVVEKHLGKTIKGRQDSTNPRVFFTQAYIQRCKAKIRGALNAITRPTNVATILQQINVQEKIFHSLLDEISPAGQVTSKLSNAQYVPHIYAKTQSEWVQSFFKQNGFIEYEAINKLGISDPKSYILKQLPQEELYFLKRIALQQRLVDLTVVTALNECNATKQYLDLSTILPSNLSVEDIEEVFHTLTSGPKQSHLSTLVYLDGIVFSQPYLNELIQPCQELALSQGKSAIDSGIYQQYIVDKTLAQKGGNASNQLDDDEDGKPDKRDERRKKAASGKAGGGAQGRETKTKSTKKHQRGRAAAAQHSDDDDDDFQRGGGGGGSNKKSVKPLDLVKCEDVVKLIFPVLEEEGIEHLAKPIAKLYLQQLNQSALAKAQELYEATPQTNRRQTHASIQERINTLLVDIRLYEKGLKLLPQDTQAQLVKYLLKSLGNEICNELALYVASECNLTVKNNNLNVDQRNKLAQECDAQYRAVLVEQNKALNKSIDDFELATESVLKVCSMIIKKVDKKKDRLLIADHKQKLQQQLLENQEPALILHLAALILFTSISGCILHASGKFVSSILQYIRGSLDDQQNALLISYHDLVLKVLQASPESAESKLAHEQLQGLQSKVVELAQNFSRASVSKAD.

Residues 404-483 (GGNASNQLDD…GGGGSNKKSV (80 aa)) are disordered.

The protein belongs to the UFL1 family.

Functionally, E3 UFM1-protein ligase that mediates ufmylation of target proteins. This is E3 UFM1-protein ligase 1 homolog from Drosophila willistoni (Fruit fly).